Here is a 241-residue protein sequence, read N- to C-terminus: MKKIKIISFSVAYLILLTPIYASAMHIMEGFLPPLWAAIWSVISLPFIVGGFSKIKKITDESPNMKLLLGLVGAFVFVLSALKLPSVTGSTSHPTGVGLGTIIFGPLPMAVIGLIVLIFQALLLAHGGITTLGANVFSMAIVGPFAGYFIFKAIKDKNRSLAVFLAAMLADLITYIVTSLQLALAHPDAVNGIVGSFTKFMGIFAITQIPLAIGEGILTLIVYNLLVEYQKEGGFNLEKTH.

Residues 1–24 (MKKIKIISFSVAYLILLTPIYASA) form the signal peptide. 6 consecutive transmembrane segments (helical) span residues 30–50 (GFLP…FIVG), 67–87 (LLLG…LPSV), 99–119 (LGTI…VLIF), 131–151 (TLGA…YFIF), 160–180 (SLAV…VTSL), and 202–222 (GIFA…TLIV).

It belongs to the CbiM family. In terms of assembly, forms an energy-coupling factor (ECF) transporter complex composed of an ATP-binding protein (A component, CbiO), a transmembrane protein (T component, CbiQ) and 2 possible substrate-capture proteins (S components, CbiM and CbiN) of unknown stoichimetry.

Its subcellular location is the cell membrane. It participates in cofactor biosynthesis; adenosylcobalamin biosynthesis. Its function is as follows. Part of the energy-coupling factor (ECF) transporter complex CbiMNOQ involved in cobalt import. This chain is Cobalt transport protein CbiM, found in Acetoanaerobium sticklandii (strain ATCC 12662 / DSM 519 / JCM 1433 / CCUG 9281 / NCIMB 10654 / HF) (Clostridium sticklandii).